The primary structure comprises 703 residues: Phosphoribosylformylglycinamidine synthase subunit PurL (703 aa).

Histidine 36 is a catalytic residue. ATP is bound by residues tyrosine 39 and lysine 80. Glutamate 82 is a binding site for Mg(2+). Substrate is bound by residues 83-86 (SHNH) and arginine 105. The active-site Proton acceptor is the histidine 84. Aspartate 106 contributes to the Mg(2+) binding site. Glutamine 226 serves as a coordination point for substrate. Mg(2+) is bound at residue aspartate 252. A substrate-binding site is contributed by 294 to 296 (ETQ). 2 residues coordinate ATP: aspartate 468 and glycine 505. Serine 508 is a binding site for substrate.

It belongs to the FGAMS family. Monomer. Part of the FGAM synthase complex composed of 1 PurL, 1 PurQ and 2 PurS subunits.

Its subcellular location is the cytoplasm. It carries out the reaction N(2)-formyl-N(1)-(5-phospho-beta-D-ribosyl)glycinamide + L-glutamine + ATP + H2O = 2-formamido-N(1)-(5-O-phospho-beta-D-ribosyl)acetamidine + L-glutamate + ADP + phosphate + H(+). Its pathway is purine metabolism; IMP biosynthesis via de novo pathway; 5-amino-1-(5-phospho-D-ribosyl)imidazole from N(2)-formyl-N(1)-(5-phospho-D-ribosyl)glycinamide: step 1/2. Part of the phosphoribosylformylglycinamidine synthase complex involved in the purines biosynthetic pathway. Catalyzes the ATP-dependent conversion of formylglycinamide ribonucleotide (FGAR) and glutamine to yield formylglycinamidine ribonucleotide (FGAM) and glutamate. The FGAM synthase complex is composed of three subunits. PurQ produces an ammonia molecule by converting glutamine to glutamate. PurL transfers the ammonia molecule to FGAR to form FGAM in an ATP-dependent manner. PurS interacts with PurQ and PurL and is thought to assist in the transfer of the ammonia molecule from PurQ to PurL. The protein is Phosphoribosylformylglycinamidine synthase subunit PurL of Sulfurisphaera tokodaii (strain DSM 16993 / JCM 10545 / NBRC 100140 / 7) (Sulfolobus tokodaii).